A 121-amino-acid chain; its full sequence is Large ribosomal subunit protein bL12 (121 aa).

It belongs to the bacterial ribosomal protein bL12 family. Homodimer. Part of the ribosomal stalk of the 50S ribosomal subunit. Forms a multimeric L10(L12)X complex, where L10 forms an elongated spine to which 2 to 4 L12 dimers bind in a sequential fashion. Binds GTP-bound translation factors.

Forms part of the ribosomal stalk which helps the ribosome interact with GTP-bound translation factors. Is thus essential for accurate translation. The sequence is that of Large ribosomal subunit protein bL12 from Clostridium perfringens (strain 13 / Type A).